A 391-amino-acid chain; its full sequence is Arginine biosynthesis bifunctional protein ArgJ 2 (391 aa).

Substrate contacts are provided by Lys167 and Ser180. Ser180 acts as the Nucleophile in catalysis.

It belongs to the ArgJ family. As to quaternary structure, heterotetramer of two alpha and two beta chains.

The protein localises to the cytoplasm. The enzyme catalyses N(2)-acetyl-L-ornithine + L-glutamate = N-acetyl-L-glutamate + L-ornithine. It catalyses the reaction L-glutamate + acetyl-CoA = N-acetyl-L-glutamate + CoA + H(+). It participates in amino-acid biosynthesis; L-arginine biosynthesis; L-ornithine and N-acetyl-L-glutamate from L-glutamate and N(2)-acetyl-L-ornithine (cyclic): step 1/1. It functions in the pathway amino-acid biosynthesis; L-arginine biosynthesis; N(2)-acetyl-L-ornithine from L-glutamate: step 1/4. Functionally, catalyzes two activities which are involved in the cyclic version of arginine biosynthesis: the synthesis of N-acetylglutamate from glutamate and acetyl-CoA as the acetyl donor, and of ornithine by transacetylation between N(2)-acetylornithine and glutamate. This Streptomyces clavuligerus protein is Arginine biosynthesis bifunctional protein ArgJ 2.